A 175-amino-acid polypeptide reads, in one-letter code: ATP synthase subunit b (175 aa).

A helical transmembrane segment spans residues Gly-19–Leu-35.

The protein belongs to the ATPase B chain family. In terms of assembly, F-type ATPases have 2 components, F(1) - the catalytic core - and F(0) - the membrane proton channel. F(1) has five subunits: alpha(3), beta(3), gamma(1), delta(1), epsilon(1). F(0) has four main subunits: a(1), b(2) and c(10-14). The alpha and beta chains form an alternating ring which encloses part of the gamma chain. F(1) is attached to F(0) by a central stalk formed by the gamma and epsilon chains, while a peripheral stalk is formed by the delta and b chains.

It is found in the cell inner membrane. Functionally, f(1)F(0) ATP synthase produces ATP from ADP in the presence of a proton or sodium gradient. F-type ATPases consist of two structural domains, F(1) containing the extramembraneous catalytic core and F(0) containing the membrane proton channel, linked together by a central stalk and a peripheral stalk. During catalysis, ATP synthesis in the catalytic domain of F(1) is coupled via a rotary mechanism of the central stalk subunits to proton translocation. Its function is as follows. Component of the F(0) channel, it forms part of the peripheral stalk, linking F(1) to F(0). This Chlorobium phaeobacteroides (strain BS1) protein is ATP synthase subunit b.